The following is a 931-amino-acid chain: Aftiphilin (931 aa).

Positions 1-49 (MEPDIIRMYSSSPPPLDNGAEDDEEDEFGEFGGFSEVSPSGVGFVDFDT) are disordered. The span at 19–29 (GAEDDEEDEFG) shows a compositional bias: acidic residues. The short motif at 28 to 31 (FGEF) is the WXXF motif 1 element. The segment covering 33–45 (GFSEVSPSGVGFV) has biased composition (low complexity). Ser151 carries the phosphoserine modification. The segment covering 371 to 381 (SVKTSDVNEIG) has biased composition (polar residues). Positions 371-454 (SVKTSDVNEI…PFVTSTQDSM (84 aa)) are disordered. Ser395 is subject to Phosphoserine. A WXXF motif 2 motif is present at residues 433-436 (FGDF). Residues 439–454 (ANGTTPPFVTSTQDSM) are compositionally biased toward polar residues. A WXXF motif 3 motif is present at residues 476-479 (FGEF). Disordered regions lie at residues 494–561 (TESD…SSAG) and 599–636 (WQSQRTDETMGTLGTPKMHSVSSAASKGAVASGHLQEP). The span at 516 to 530 (GGKDSKPDSKLKNGQ) shows a compositional bias: basic and acidic residues. Phosphothreonine is present on Thr613. Over residues 618-631 (SVSSAASKGAVASG) the composition is skewed to low complexity. Residues 712–714 (YQW) carry the CLTCL1/Clathrin-binding motif. The segment at 821–825 (LLNLD) is clathrin-binding.

In terms of assembly, self-associates. Interacts with GGA1 (via GAE domain). Interacts with GGA3 (via GAE domain), AP1G1 (via GAE domain) and AP1G2 (via GAE domain). Component of the aftiphilin/p200/gamma-synergin complex, at least composed of AFTPH/aftiphilin, HEATR5B/p200a and SYNRG/gamma-synergin, which plays a role in the AP1G1/AP-1-mediated protein trafficking from early to recycling endosomes. Within the complex interacts with HEATR5B/p200a and SYNRG/gamma-synergin; the interactions are direct. Interacts with AP1G1/AP-1; the interaction is required to recruit AFTPH/aftiphilin to the perinuclear region of the cell. Interacts with CLTCL1/Clathrin.

It localises to the cytoplasm. It is found in the perinuclear region. The protein localises to the cytoplasmic vesicle. Its subcellular location is the clathrin-coated vesicle. Functionally, component of clathrin-coated vesicles. Component of the aftiphilin/p200/gamma-synergin complex, which plays roles in AP1G1/AP-1-mediated protein trafficking including the trafficking of transferrin from early to recycling endosomes, and the membrane trafficking of furin and the lysosomal enzyme cathepsin D between the trans-Golgi network (TGN) and endosomes. The polypeptide is Aftiphilin (Aftph) (Mus musculus (Mouse)).